The following is a 179-amino-acid chain: Cytochrome b6-f complex iron-sulfur subunit (179 aa).

The chain crosses the membrane as a helical span at residues 20–42 (LLTFGTITGVAAGALYPIVKYFI). Positions 60–161 (GNDVIVSQFL…ANVTDNDKVV (102 aa)) constitute a Rieske domain. Positions 107, 109, 125, and 128 each coordinate [2Fe-2S] cluster. The cysteines at positions 112 and 127 are disulfide-linked.

This sequence belongs to the Rieske iron-sulfur protein family. In terms of assembly, the 4 large subunits of the cytochrome b6-f complex are cytochrome b6, subunit IV (17 kDa polypeptide, PetD), cytochrome f and the Rieske protein, while the 4 small subunits are PetG, PetL, PetM and PetN. The complex functions as a dimer. It depends on [2Fe-2S] cluster as a cofactor.

It is found in the cellular thylakoid membrane. The catalysed reaction is 2 oxidized [plastocyanin] + a plastoquinol + 2 H(+)(in) = 2 reduced [plastocyanin] + a plastoquinone + 4 H(+)(out). Component of the cytochrome b6-f complex, which mediates electron transfer between photosystem II (PSII) and photosystem I (PSI), cyclic electron flow around PSI, and state transitions. In Microcystis aeruginosa (strain NIES-843 / IAM M-2473), this protein is Cytochrome b6-f complex iron-sulfur subunit.